Here is a 338-residue protein sequence, read N- to C-terminus: tRNA N6-adenosine threonylcarbamoyltransferase (338 aa).

Residues His111 and His115 each contribute to the Fe cation site. Substrate-binding positions include 134–138, Asp167, Gly180, and Asn275; that span reads LLSGG. Asp304 provides a ligand contact to Fe cation.

It belongs to the KAE1 / TsaD family. It depends on Fe(2+) as a cofactor.

Its subcellular location is the cytoplasm. The catalysed reaction is L-threonylcarbamoyladenylate + adenosine(37) in tRNA = N(6)-L-threonylcarbamoyladenosine(37) in tRNA + AMP + H(+). Its function is as follows. Required for the formation of a threonylcarbamoyl group on adenosine at position 37 (t(6)A37) in tRNAs that read codons beginning with adenine. Is involved in the transfer of the threonylcarbamoyl moiety of threonylcarbamoyl-AMP (TC-AMP) to the N6 group of A37, together with TsaE and TsaB. TsaD likely plays a direct catalytic role in this reaction. The polypeptide is tRNA N6-adenosine threonylcarbamoyltransferase (Leptospira borgpetersenii serovar Hardjo-bovis (strain JB197)).